A 432-amino-acid chain; its full sequence is Enolase (432 aa).

A (2R)-2-phosphoglycerate-binding site is contributed by glutamine 163. Glutamate 205 serves as the catalytic Proton donor. Aspartate 242, glutamate 287, and aspartate 314 together coordinate Mg(2+). Residues lysine 339, arginine 368, serine 369, and lysine 390 each contribute to the (2R)-2-phosphoglycerate site. Lysine 339 (proton acceptor) is an active-site residue.

Belongs to the enolase family. The cofactor is Mg(2+).

It is found in the cytoplasm. Its subcellular location is the secreted. The protein localises to the cell surface. It carries out the reaction (2R)-2-phosphoglycerate = phosphoenolpyruvate + H2O. The protein operates within carbohydrate degradation; glycolysis; pyruvate from D-glyceraldehyde 3-phosphate: step 4/5. In terms of biological role, catalyzes the reversible conversion of 2-phosphoglycerate (2-PG) into phosphoenolpyruvate (PEP). It is essential for the degradation of carbohydrates via glycolysis. This Myxococcus xanthus (strain DK1622) protein is Enolase.